A 386-amino-acid polypeptide reads, in one-letter code: Short integuments 2, mitochondrial (386 aa).

Positions 37–207 constitute a CP-type G domain; sequence TRAIRNRLKL…VLDSPGVLVP (171 aa). The DARXP motif motif lies at 55-59; that stretch reads DARIP. Residues 81–84 form a G4 region; sequence NKKD. GTP is bound by residues 81 to 84, 109 to 110, and 146 to 151; these read NKKD, NA, and NVGKSA. A G5 region spans residues 109-111; sequence NAH. The G1 stretch occupies residues 143 to 150; the sequence is GVPNVGKS. Residues 180 to 184 are G2; that stretch reads GVTQD. The interval 200 to 203 is G3; that stretch reads DSPG. Gly203 lines the GTP pocket.

It belongs to the TRAFAC class YlqF/YawG GTPase family. MTG1 subfamily. In terms of tissue distribution, expressed in seedlings, roots, leaves, stems, inflorescences and siliques.

It localises to the mitochondrion. Functionally, GTPase that may function in mitochondrial ribosome assembly. Involved in a variety of growth processes during vegetative development and promotes growth and cell division in the developing integuments. The polypeptide is Short integuments 2, mitochondrial (Arabidopsis thaliana (Mouse-ear cress)).